A 190-amino-acid chain; its full sequence is Glutamyl-tRNA(Gln) amidotransferase subunit C, mitochondrial (190 aa).

A mitochondrion-targeting transit peptide spans 1-96 (MISFQIILQQ…VLNLKQAVRF (96 aa)). Residues 28–57 (KSNSTAVGSSDEDDEIYVPKKPIPSPIDQS) are disordered.

Belongs to the GatC family. In terms of assembly, subunit of the heterotrimeric GatCAB amidotransferase (AdT) complex, composed of A, B and C subunits.

Its subcellular location is the mitochondrion. It catalyses the reaction L-glutamyl-tRNA(Gln) + L-glutamine + ATP + H2O = L-glutaminyl-tRNA(Gln) + L-glutamate + ADP + phosphate + H(+). In terms of biological role, allows the formation of correctly charged Gln-tRNA(Gln) through the transamidation of misacylated Glu-tRNA(Gln) in the mitochondria. The reaction takes place in the presence of glutamine and ATP through an activated gamma-phospho-Glu-tRNA(Gln). The chain is Glutamyl-tRNA(Gln) amidotransferase subunit C, mitochondrial from Loa loa (Eye worm).